The chain runs to 41 residues: Photosystem I reaction center subunit IX (41 aa).

The chain crosses the membrane as a helical span at residues 7 to 27; sequence YLSTAPVVAAAWFTFTAGLLI.

Belongs to the PsaJ family.

The protein localises to the plastid. Its subcellular location is the chloroplast thylakoid membrane. Its function is as follows. May help in the organization of the PsaE and PsaF subunits. The protein is Photosystem I reaction center subunit IX of Oltmannsiellopsis viridis (Marine flagellate).